A 202-amino-acid chain; its full sequence is Urease accessory protein UreG (202 aa).

11–18 (GPVGSGKT) is a GTP binding site.

The protein belongs to the SIMIBI class G3E GTPase family. UreG subfamily. Homodimer. UreD, UreF and UreG form a complex that acts as a GTP-hydrolysis-dependent molecular chaperone, activating the urease apoprotein by helping to assemble the nickel containing metallocenter of UreC. The UreE protein probably delivers the nickel.

It localises to the cytoplasm. Its function is as follows. Facilitates the functional incorporation of the urease nickel metallocenter. This process requires GTP hydrolysis, probably effectuated by UreG. This is Urease accessory protein UreG from Prochlorococcus marinus (strain MIT 9313).